A 306-amino-acid chain; its full sequence is 4-hydroxy-3-methylbut-2-enyl diphosphate reductase (306 aa).

Residue cysteine 12 coordinates [4Fe-4S] cluster. Residues histidine 41 and histidine 74 each coordinate (2E)-4-hydroxy-3-methylbut-2-enyl diphosphate. 2 residues coordinate dimethylallyl diphosphate: histidine 41 and histidine 74. Residues histidine 41 and histidine 74 each coordinate isopentenyl diphosphate. Cysteine 96 is a binding site for [4Fe-4S] cluster. Residue histidine 124 coordinates (2E)-4-hydroxy-3-methylbut-2-enyl diphosphate. Histidine 124 serves as a coordination point for dimethylallyl diphosphate. Position 124 (histidine 124) interacts with isopentenyl diphosphate. Glutamate 126 acts as the Proton donor in catalysis. Residue threonine 164 coordinates (2E)-4-hydroxy-3-methylbut-2-enyl diphosphate. A [4Fe-4S] cluster-binding site is contributed by cysteine 194. (2E)-4-hydroxy-3-methylbut-2-enyl diphosphate contacts are provided by serine 222, serine 223, asparagine 224, and serine 266. 4 residues coordinate dimethylallyl diphosphate: serine 222, serine 223, asparagine 224, and serine 266. Positions 222, 223, 224, and 266 each coordinate isopentenyl diphosphate.

It belongs to the IspH family. [4Fe-4S] cluster serves as cofactor.

It catalyses the reaction isopentenyl diphosphate + 2 oxidized [2Fe-2S]-[ferredoxin] + H2O = (2E)-4-hydroxy-3-methylbut-2-enyl diphosphate + 2 reduced [2Fe-2S]-[ferredoxin] + 2 H(+). The enzyme catalyses dimethylallyl diphosphate + 2 oxidized [2Fe-2S]-[ferredoxin] + H2O = (2E)-4-hydroxy-3-methylbut-2-enyl diphosphate + 2 reduced [2Fe-2S]-[ferredoxin] + 2 H(+). It functions in the pathway isoprenoid biosynthesis; dimethylallyl diphosphate biosynthesis; dimethylallyl diphosphate from (2E)-4-hydroxy-3-methylbutenyl diphosphate: step 1/1. The protein operates within isoprenoid biosynthesis; isopentenyl diphosphate biosynthesis via DXP pathway; isopentenyl diphosphate from 1-deoxy-D-xylulose 5-phosphate: step 6/6. In terms of biological role, catalyzes the conversion of 1-hydroxy-2-methyl-2-(E)-butenyl 4-diphosphate (HMBPP) into a mixture of isopentenyl diphosphate (IPP) and dimethylallyl diphosphate (DMAPP). Acts in the terminal step of the DOXP/MEP pathway for isoprenoid precursor biosynthesis. In Ruthia magnifica subsp. Calyptogena magnifica, this protein is 4-hydroxy-3-methylbut-2-enyl diphosphate reductase.